The sequence spans 211 residues: Histidine biosynthesis bifunctional protein HisIE (211 aa).

A phosphoribosyl-AMP cyclohydrolase region spans residues 1-122 (MSVKAAEVSS…DPQEESQMVW (122 aa)). The phosphoribosyl-ATP pyrophosphohydrolase stretch occupies residues 123-211 (LHQLEQLLAA…VINKLKERHK (89 aa)).

This sequence in the N-terminal section; belongs to the PRA-CH family. In the C-terminal section; belongs to the PRA-PH family.

It is found in the cytoplasm. The catalysed reaction is 1-(5-phospho-beta-D-ribosyl)-ATP + H2O = 1-(5-phospho-beta-D-ribosyl)-5'-AMP + diphosphate + H(+). The enzyme catalyses 1-(5-phospho-beta-D-ribosyl)-5'-AMP + H2O = 1-(5-phospho-beta-D-ribosyl)-5-[(5-phospho-beta-D-ribosylamino)methylideneamino]imidazole-4-carboxamide. The protein operates within amino-acid biosynthesis; L-histidine biosynthesis; L-histidine from 5-phospho-alpha-D-ribose 1-diphosphate: step 2/9. It functions in the pathway amino-acid biosynthesis; L-histidine biosynthesis; L-histidine from 5-phospho-alpha-D-ribose 1-diphosphate: step 3/9. This Vibrio vulnificus (strain YJ016) protein is Histidine biosynthesis bifunctional protein HisIE.